The following is a 329-amino-acid chain: Glycerol-3-phosphate dehydrogenase [NAD(P)+] (329 aa).

NADPH-binding residues include S10, W11, R31, and K105. The sn-glycerol 3-phosphate site is built by K105, G134, and S136. Position 138 (A138) interacts with NADPH. Residues K189, D242, S252, R253, and N254 each contribute to the sn-glycerol 3-phosphate site. K189 (proton acceptor) is an active-site residue. R253 provides a ligand contact to NADPH. The NADPH site is built by V277 and E279.

Belongs to the NAD-dependent glycerol-3-phosphate dehydrogenase family.

The protein localises to the cytoplasm. It carries out the reaction sn-glycerol 3-phosphate + NAD(+) = dihydroxyacetone phosphate + NADH + H(+). The enzyme catalyses sn-glycerol 3-phosphate + NADP(+) = dihydroxyacetone phosphate + NADPH + H(+). It functions in the pathway membrane lipid metabolism; glycerophospholipid metabolism. Catalyzes the reduction of the glycolytic intermediate dihydroxyacetone phosphate (DHAP) to sn-glycerol 3-phosphate (G3P), the key precursor for phospholipid synthesis. The protein is Glycerol-3-phosphate dehydrogenase [NAD(P)+] of Neisseria meningitidis serogroup A / serotype 4A (strain DSM 15465 / Z2491).